Reading from the N-terminus, the 583-residue chain is Phosphoglucomutase, cytoplasmic (583 aa).

The disordered stretch occupies residues 1-20 (MATFKVSRVETKPYDGQKPG). 2 residues coordinate alpha-D-glucose 1,6-bisphosphate: Arg-25 and Ser-124. Ser-124 serves as the catalytic Phosphoserine intermediate. Mg(2+) contacts are provided by Ser-124, Asp-300, Asp-302, and Asp-304. At Ser-124 the chain carries Phosphoserine. Positions 304, 305, 368, 387, 389, and 400 each coordinate alpha-D-glucose 1,6-bisphosphate.

Belongs to the phosphohexose mutase family. As to quaternary structure, monomer. Mg(2+) serves as cofactor.

The protein resides in the cytoplasm. It carries out the reaction alpha-D-glucose 1-phosphate = alpha-D-glucose 6-phosphate. The enzyme catalyses O-phospho-L-seryl-[protein] + alpha-D-glucose 1-phosphate = alpha-D-glucose 1,6-bisphosphate + L-seryl-[protein]. The catalysed reaction is alpha-D-glucose 1,6-bisphosphate + L-seryl-[protein] = O-phospho-L-seryl-[protein] + alpha-D-glucose 6-phosphate. Catalyzes the reversible isomerization of alpha-D-glucose 1-phosphate to alpha-D-glucose 6-phosphate. The mechanism proceeds via the intermediate compound alpha-D-glucose 1,6-bisphosphate. This enzyme participates in both the breakdown and synthesis of glucose. The protein is Phosphoglucomutase, cytoplasmic (PGM1) of Mesembryanthemum crystallinum (Common ice plant).